A 200-amino-acid chain; its full sequence is Probable molybdenum cofactor guanylyltransferase (200 aa).

GTP-binding positions include 9-11, K21, D69, and D100; that span reads LAG. A Mg(2+)-binding site is contributed by D100.

The protein belongs to the MobA family. Requires Mg(2+) as cofactor.

The protein resides in the cytoplasm. The catalysed reaction is Mo-molybdopterin + GTP + H(+) = Mo-molybdopterin guanine dinucleotide + diphosphate. Transfers a GMP moiety from GTP to Mo-molybdopterin (Mo-MPT) cofactor (Moco or molybdenum cofactor) to form Mo-molybdopterin guanine dinucleotide (Mo-MGD) cofactor. This chain is Probable molybdenum cofactor guanylyltransferase, found in Bacillus cereus (strain Q1).